The following is a 250-amino-acid chain: NADH-quinone oxidoreductase subunit C (250 aa).

The disordered stretch occupies residues 193-250 (GMTPPLPGDEKADMPPIDDPMVTEGPEDTGAGARANAKAAEGTPADPPAMDDEEEDDA). Residues 222 to 236 (GAGARANAKAAEGTP) show a composition bias toward low complexity. Residues 241-250 (AMDDEEEDDA) are compositionally biased toward acidic residues.

The protein belongs to the complex I 30 kDa subunit family. In terms of assembly, NDH-1 is composed of 14 different subunits. Subunits NuoB, C, D, E, F, and G constitute the peripheral sector of the complex.

It localises to the cell inner membrane. The enzyme catalyses a quinone + NADH + 5 H(+)(in) = a quinol + NAD(+) + 4 H(+)(out). Functionally, NDH-1 shuttles electrons from NADH, via FMN and iron-sulfur (Fe-S) centers, to quinones in the respiratory chain. The immediate electron acceptor for the enzyme in this species is believed to be ubiquinone. Couples the redox reaction to proton translocation (for every two electrons transferred, four hydrogen ions are translocated across the cytoplasmic membrane), and thus conserves the redox energy in a proton gradient. This is NADH-quinone oxidoreductase subunit C from Erythrobacter litoralis (strain HTCC2594).